The primary structure comprises 243 residues: Leucyl/phenylalanyl-tRNA--protein transferase (243 aa).

The interval 1-22 (MHSQPYLLSPTPNTPFPPAEHA) is disordered.

This sequence belongs to the L/F-transferase family.

The protein resides in the cytoplasm. It carries out the reaction N-terminal L-lysyl-[protein] + L-leucyl-tRNA(Leu) = N-terminal L-leucyl-L-lysyl-[protein] + tRNA(Leu) + H(+). The enzyme catalyses N-terminal L-arginyl-[protein] + L-leucyl-tRNA(Leu) = N-terminal L-leucyl-L-arginyl-[protein] + tRNA(Leu) + H(+). It catalyses the reaction L-phenylalanyl-tRNA(Phe) + an N-terminal L-alpha-aminoacyl-[protein] = an N-terminal L-phenylalanyl-L-alpha-aminoacyl-[protein] + tRNA(Phe). Functions in the N-end rule pathway of protein degradation where it conjugates Leu, Phe and, less efficiently, Met from aminoacyl-tRNAs to the N-termini of proteins containing an N-terminal arginine or lysine. This chain is Leucyl/phenylalanyl-tRNA--protein transferase, found in Xylella fastidiosa (strain M23).